The sequence spans 354 residues: Magnesium-protoporphyrin IX monomethyl ester [oxidative] cyclase 2 (354 aa).

It belongs to the AcsF family. Fe cation serves as cofactor.

The catalysed reaction is Mg-protoporphyrin IX 13-monomethyl ester + 3 NADPH + 3 O2 + 2 H(+) = 3,8-divinyl protochlorophyllide a + 3 NADP(+) + 5 H2O. The protein operates within porphyrin-containing compound metabolism; chlorophyll biosynthesis (light-independent). In terms of biological role, catalyzes the formation of the isocyclic ring in chlorophyll biosynthesis. Mediates the cyclase reaction, which results in the formation of divinylprotochlorophyllide (Pchlide) characteristic of all chlorophylls from magnesium-protoporphyrin IX 13-monomethyl ester (MgPMME). The sequence is that of Magnesium-protoporphyrin IX monomethyl ester [oxidative] cyclase 2 from Thermosynechococcus vestitus (strain NIES-2133 / IAM M-273 / BP-1).